The sequence spans 543 residues: MFSWLKKGGARGQRPEAIRTVTSSLKELYRTKLLPLEEHYRFGSFHSPALEDADFDGKPMVLVAGQYSTGKTSFIQYLLEQEVPGSRVGPEPTTDCFVAVMHGETEGTVPGNALVVDPEKPFRKLNPFGNTFLNRFMCAQLPNQVLESISIIDTPGILSGAKQRVSRGYDFPAVLRWFAERVDLIILLFDAHKLEISDEFSEAIGALRGHEDKIRVVLNKADMVETQQLMRVYGALMWALGKVVGTPEVLRVYIGSFWSQPLLVPDNRRLFELEEQDLFRDIQGLPRHAALRKLNDLVKRARLVRVHAYIISYLKKEMPTVFGKENKKKQLILKLPVIFAKIQLEHHISPGDFPDCQKMQELLMAHDFTKFHSLKPKLLEALDDMLAQDIAKLMPLLRQEELESVEAGVQGGAFEGTRMGPFVERGPDEAIEDGEEGSEDDAEWVVTKDKSKYDEIFYNLAPADGKLSGSKAKTWMVGTKLPNSVLGRIWKLSDVDRDGMLDDEEFALASHLIEAKLEGHGLPTNLPRRLVPPSKRRQKGSAE.

A phosphoserine mark is found at S3 and S44. The Dynamin-type G domain occupies 55–286; the sequence is FDGKPMVLVA…DLFRDIQGLP (232 aa). Residues 65–72 form a G1 motif region; sequence GQYSTGKT. 65-72 is an ATP binding site; it reads GQYSTGKT. The interval 91-92 is G2 motif; it reads EP. The tract at residues 153–156 is G3 motif; that stretch reads DTPG. The G4 motif stretch occupies residues 219-222; sequence NKAD. K220 is an ATP binding site. A region of interest (G5 motif) is located at residue V243. W258 serves as a coordination point for ATP. Residues 320–340 form a mediates membrane-binding region; that stretch reads TVFGKENKKKQLILKLPVIFA. 5 positions are modified to phosphoserine: S438, S468, S470, S484, and S493. The region spanning 449 to 537 is the EH domain; it reads DKSKYDEIFY…RRLVPPSKRR (89 aa). Positions 481-516 constitute an EF-hand domain; that stretch reads LPNSVLGRIWKLSDVDRDGMLDDEEFALASHLIEAK. Residues D494, D496, D498, M500, and E505 each coordinate Ca(2+). Residues 521–543 form a disordered region; sequence GLPTNLPRRLVPPSKRRQKGSAE. The segment covering 534-543 has biased composition (basic residues); sequence SKRRQKGSAE.

Belongs to the TRAFAC class dynamin-like GTPase superfamily. Dynamin/Fzo/YdjA family. EHD subfamily. Homodimer and homooligomer. Interacts with EHD1. May also interact with EHD3 and EHD4. Interacts with MYOF. Interacts with EHBP1. Interacts with FER1L5 (via second C2 domain). Interacts with CAV1 in a cholesterol-dependent manner. Interacts (via EH domain) with PACSIN2 (via NPF motifs); this interaction probably stabilizes the caveolae. Detected in lung and adipocytes. Detected at lower levels in heart and skeletal muscle.

The protein localises to the cell membrane. It localises to the membrane. Its subcellular location is the caveola. It is found in the endosome membrane. The protein resides in the cytoplasm. The protein localises to the cytosol. The very low intrinsic ATPase activity is increased upon interaction with liposomes. ATP- and membrane-binding protein that controls membrane reorganization/tubulation upon ATP hydrolysis. Plays a role in membrane trafficking between the plasma membrane and endosomes. Important for the internalization of GLUT4. Required for fusion of myoblasts to skeletal muscle myotubes. Required for normal translocation of FER1L5 to the plasma membrane. Regulates the equilibrium between cell surface-associated and cell surface-dissociated caveolae by constraining caveolae at the cell membrane. The sequence is that of EH domain-containing protein 2 from Mus musculus (Mouse).